A 583-amino-acid polypeptide reads, in one-letter code: Membrane protein insertase YidC (583 aa).

Residues 5–25 (SVTGLALIALIMIVWLQFMSP) traverse the membrane as a helical segment. The tract at residues 28–50 (KSVQPDNRPKAQTTATVSQEKTE) is disordered. The span at 37–46 (KAQTTATVSQ) shows a compositional bias: polar residues. A run of 5 helical transmembrane segments spans residues 341 to 361 (PFAE…ISNY), 362 to 382 (GLII…LSMA), 427 to 447 (LGGC…FYVF), 477 to 497 (IPVY…TVFI), and 515 to 535 (LYIF…GLGL).

This sequence belongs to the OXA1/ALB3/YidC family. Type 1 subfamily. As to quaternary structure, interacts with the Sec translocase complex via SecD. Specifically interacts with transmembrane segments of nascent integral membrane proteins during membrane integration.

The protein localises to the cell inner membrane. Functionally, required for the insertion and/or proper folding and/or complex formation of integral membrane proteins into the membrane. Involved in integration of membrane proteins that insert both dependently and independently of the Sec translocase complex, as well as at least some lipoproteins. Aids folding of multispanning membrane proteins. This chain is Membrane protein insertase YidC, found in Chlorobium limicola (strain DSM 245 / NBRC 103803 / 6330).